The primary structure comprises 1330 residues: Ubinuclein-2 (1330 aa).

Residues 1 to 133 (MAEPRRVAFI…PRETVRLELV (133 aa)) are disordered. Serine 13 carries the phosphoserine modification. 2 stretches are compositionally biased toward basic and acidic residues: residues 16 to 37 (RRRE…EPPR) and 67 to 79 (PREK…EVSR). Positions 93–111 (PEPPPPPLPQLHLQPPPPR) are enriched in pro residues. Residues 123–133 (PPRETVRLELV) show a composition bias toward basic and acidic residues. A Phosphothreonine modification is found at threonine 244. The interval 249 to 304 (QASDTEEDDTTDNQKHKPPKIPKIKEDDIEMKKRKRKEEGEKEKKPRKKVPKQLGV) is disordered. Serine 251 is modified (phosphoserine). The residue at position 253 (threonine 253) is a Phosphothreonine. Lysine 273 participates in a covalent cross-link: Glycyl lysine isopeptide (Lys-Gly) (interchain with G-Cter in SUMO2). Serine 312 is modified (phosphoserine). The disordered stretch occupies residues 336-356 (KDALKKESNPKTPLNFSTSSL). The segment covering 345-356 (PKTPLNFSTSSL) has biased composition (polar residues). Residues serine 417, serine 420, serine 423, and serine 585 each carry the phosphoserine modification. Disordered regions lie at residues 574-597 (FQTD…GKRV), 672-730 (LTSA…STPV), 802-833 (PKKL…DLAH), 864-913 (GLQR…VTKV), 938-988 (PVVK…SRTV), 1017-1201 (MAAS…GSSV), and 1308-1330 (HVQQ…RKSQ). Basic and acidic residues-rich tracts occupy residues 575–585 (QTDEEREKNGS) and 688–699 (KVKECSPKKDQK). Over residues 701–730 (PASSVASVGGPSTSSSTSAVASTSSGSTPV) the composition is skewed to low complexity. Polar residues predominate over residues 807 to 816 (STQTAHSSSL). Low complexity predominate over residues 864–895 (GLQRSSQIHASSSSQTHVSSSSQAQVAASSHT). 2 stretches are compositionally biased toward polar residues: residues 896–913 (LGTS…VTKV) and 938–956 (PVVK…PLTK). Over residues 1017-1029 (MAASPKLASSPKP) the composition is skewed to low complexity. Residues 1030–1044 (ATSPKPLPSPKPSAS) show a composition bias toward pro residues. 2 stretches are compositionally biased toward low complexity: residues 1045-1054 (PKPSQSAKPS) and 1061-1079 (SKSN…SSPN). Lysine 1052 carries the post-translational modification N6-acetyllysine. Composition is skewed to polar residues over residues 1082–1148 (VAQS…NSLS), 1158–1169 (RGSNLNSSGANR), and 1308–1317 (HVQQTFNDGG). A Phosphoserine modification is found at serine 1107. An N6-acetyllysine modification is found at lysine 1132. Residues 1321 to 1330 (GDTKLPRKSQ) show a composition bias toward basic and acidic residues.

Belongs to the ubinuclein family.

This chain is Ubinuclein-2 (UBN2), found in Bos taurus (Bovine).